Consider the following 1462-residue polypeptide: Iron-sulfur cluster assembly protein SufD (1462 aa).

Disordered regions lie at residues 500–525, 938–970, and 1111–1153; these read IDNNQNDDIDNNNNNNNNNNNCDNPY, NQNKENENENENNSQSDNNTTKQHIQDEQGTEQ, and NIPS…EKEE. Residues 510–523 show a composition bias toward low complexity; it reads NNNNNNNNNNNCDN. The span at 961–970 shows a compositional bias: basic and acidic residues; it reads HIQDEQGTEQ. Residues 1111-1136 are compositionally biased toward low complexity; sequence NIPSNNKQTNSNNNSEYNNEQNNCSN.

Belongs to the iron-sulfur cluster assembly SufBD family. Component of a complex composed of SufB, SufC and SufD in a stoichiometric ratio of 1:2:1. Interacts with SufB. Interacts with SufC; the interaction enhances the ATPase activity of SufC. Proteolytically cleaved.

The protein resides in the plastid. The protein localises to the apicoplast. It functions in the pathway cofactor biosynthesis; iron-sulfur cluster biosynthesis. In terms of biological role, participates in the sulfur mobilization (SUF) pathway for iron-sulfur (Fe-S) cluster biogenesis. As part of a complex consisting of SufB-SufC(2)-SufD, involved in assembly of [4Fe-4S] clusters. Enhances the ATPase activity of SufC. This is Iron-sulfur cluster assembly protein SufD from Plasmodium falciparum (isolate 3D7).